The following is a 224-amino-acid chain: Urease accessory protein UreF (224 aa).

It belongs to the UreF family. UreD, UreF and UreG form a complex that acts as a GTP-hydrolysis-dependent molecular chaperone, activating the urease apoprotein by helping to assemble the nickel containing metallocenter of UreC. The UreE protein probably delivers the nickel.

It is found in the cytoplasm. Required for maturation of urease via the functional incorporation of the urease nickel metallocenter. The sequence is that of Urease accessory protein UreF from Pseudomonas putida (strain ATCC 47054 / DSM 6125 / CFBP 8728 / NCIMB 11950 / KT2440).